The chain runs to 912 residues: Coatomer subunit beta (912 aa).

10 HEAT repeats span residues 59–96 (PIPQLLMPIILYVMPSNDHTIKKLLLIYWEVIEKTHLG), 100–135 (SEMILVCNSLLNDLNHPNEFVRGSTLRFLCKLREAE), 136–172 (VLEPLVPSVRSNLENRHAYCRRNAVLAIYNIYSHFDY), 244–281 (SERSKYIKCIFTLLNSSSPAVKYESAGTLLSLSSAPTA), 300–337 (NVKMIVLDKLIEIKKNHSKIMEELVMDILRALSSPNID), 339–375 (CKKVLNIVLDSVTPKNIDEIILFLKKEINKTQSKEFD), 397–434 (EVLGNVVPLLMEYLGDSYLPSAVDVVIFLREVVETYPS), 441–479 (KKLIENLSSIKVSKVYRVAVWVIAEYVTCLEDLQYAMTS), 550–575 (LKAQVMMIISVLINLSKASQVSTSKS), and 576–612 (AYERMLSCIQVLIDSNATIKKIWLQDCRDSFANYLKY).

Oligomeric complex that consists of at least the alpha, beta, beta', gamma, delta, epsilon and zeta subunits.

The protein localises to the cytoplasm. The protein resides in the golgi apparatus membrane. It is found in the cytoplasmic vesicle. It localises to the COPI-coated vesicle membrane. The coatomer is a cytosolic protein complex that binds to dilysine motifs and reversibly associates with Golgi non-clathrin-coated vesicles, which further mediate biosynthetic protein transport from the ER, via the Golgi up to the trans Golgi network. Coatomer complex is required for budding from Golgi membranes, and is essential for the retrograde Golgi-to-ER transport of dilysine-tagged proteins. The protein is Coatomer subunit beta (copb) of Dictyostelium discoideum (Social amoeba).